Here is a 1610-residue protein sequence, read N- to C-terminus: MKKEGSSGSFRLQPNTGSLSRAVSWINFSSLSRQTKRLFRSDGELSVCGQQVEVDDENWIYRAQPRKAVSNLDEESRWTVHYTAPWHQQENVFLPTTRPPCVEDLHRQAKLNLKSVLRECDKLRHDGYRSSQYYSQGPTFAANASPFCDDYQDEDEETDQKCSLSSSEEERFISIRRPKTPASSDFSDLNTQTNWTKSLPLPTPEEKMRQQAQTVQADVVPINITASGTGQDDADGHSVYTPDHYSTLGRFNSCRSAGQRSETRDSSCQTEDVKVVPPSMRRIRAQKGQGIAAQMGHFSGSSGNMSVLSDSAGIVFPSRLDSDAGFHSLPRSGARANIQSLEPRLGALGPAGDMNGTFLYQRGHPQADENLGHLGGASGTGTLLRPKSQELRHFESENIMSPACVVSPHATYSTSIIPNATLSSSSEVIAIPTAQSAGQRESKSSGSSHARIKSRDHLISRHAVKGDPQSPGRHWNEGHATILSQDLDPHSPGEPALLSLCDSAVPLNAPANRENGSQAMPYNCRNNLAFPAHPQDVDGKSESSYSGGGGHSSSEPWEYKSSGNGRASPLKPHLATPGYSTPTSNMSSCSLDQTSNKEDAGSLYSEDHDGYCASVHTDSGHGSGNLCNSSDGFGNPRHSVINVFVGRAQKNQGDRSNYQDKSLSRNISLKKAKKPPLPPSRTDSLRRIPKKSSQCNGQVLNESLIATLQHSLQLSLPGKSGSSPSQSPCSDLEEPWLPRSRSQSTVSAGSSMTSATTPNVYSLCGATPSQSDTSSVKSEYTDPWGYYIDYTGMQEDPGNPAGGCSTSSGVPTGNGPVRHVQEGSRATMPQVPGGSVKPKIMSPEKSHRVISPSSGYSSQSNTPTALTPVPVFLKSVSPANGKGKPKPKVPERKSSLISSVSISSSSTSLSSSTSTEGSGTMKKLDPAVGSPPAPPPPPVPSPPFPCPADRSPFLPPPPPVTDCSQGSPLPHSPVFPPPPPEALIPFCSPPDWCLSPPRPALSPILPDSPVSLPLPPPLLPSSEPPPAPPLDPKFMKDTRPPFTNSGQPESSRGSLRPPSTKEETSRPPMPLITTEALQMVQLRPVRKNSGAEAAQLSERTAQEQRTPVAPQYHLKPSAFLKSRNSTNEMESESQPASVTSSLPTPAKSSSQGDHGSAAERGGPVSRSPGAPSAGEAEARPSPSTTPLPDSSPSRKPPPISKKPKLFLVVPPPQKDFAVEPAENVSEALRAVPSPTTGEEGSVHSREAKESSAAQAGSHATHPGTSVLEGGAAGSMSPSRVEANVPMVQPDVSPAPKQEEPAENSADTGGDGESCLSQQDGAAGVPETNAAGSSSEACDFLKEDGNDEVMTPSRPRTTEDLFAAIHRSKRKVLGRRDSDDDHSRNHSPSPPVTPTGAAPSLASPKQVGSIQRSIRKSSTSSDNFKALLLKKGSRSDTSARMSAAEMLKNTDPRFQRSRSEPSPDAPESPSSCSPSKNRRAQEEWAKNEGLMPRSLSFSGPRYGRSRTPPSAASSRYSMRNRIQSSPMTVISEGEGEAVEPVDSIARGALGAAEGCSLDGLAREEMDEGGLLCGEGPAASLQPQAPGPVDGTASAEGREPSPQCGGSLSEES.

S24 carries the phosphoserine modification. Residues 145-169 (SPFCDDYQDEDEETDQKCSLSSSEE) form a disordered region. 2 positions are modified to phosphoserine: S198 and S328. Positions 433–448 (TAQSAGQRESKSSGSS) are enriched in polar residues. 2 disordered regions span residues 433–477 (TAQS…HWNE) and 531–602 (PAHP…DAGS). S568 is modified (phosphoserine). Polar residues predominate over residues 578–594 (GYSTPTSNMSSCSLDQT). S639 carries the phosphoserine modification. Positions 649–667 (QKNQGDRSNYQDKSLSRNI) are enriched in polar residues. 5 disordered regions span residues 649–693 (QKNQ…KKSS), 715–778 (SLPG…SVKS), 791–981 (TGMQ…PPPE), 997–1535 (PRPA…GEGE), and 1566–1610 (EGGL…SEES). The segment covering 715–730 (SLPGKSGSSPSQSPCS) has biased composition (low complexity). 3 stretches are compositionally biased toward polar residues: residues 740–760 (SRSQ…TPNV), 767–778 (TPSQSDTSSVKS), and 851–865 (SPSS…TPTA). A compositionally biased stretch (low complexity) spans 895–928 (SLISSVSISSSSTSLSSSTSTEGSGTMKKLDPAV). 2 stretches are compositionally biased toward pro residues: residues 929–946 (GSPP…PFPC) and 970–981 (PHSPVFPPPPPE). Positions 1001 to 1011 (LSPILPDSPVS) are enriched in low complexity. Residues 1012–1031 (LPLPPPLLPSSEPPPAPPLD) show a composition bias toward pro residues. Positions 1041-1053 (PFTNSGQPESSRG) are enriched in polar residues. Phosphoserine is present on S1089. The span at 1122-1153 (SRNSTNEMESESQPASVTSSLPTPAKSSSQGD) shows a compositional bias: polar residues. Residue S1167 is modified to Phosphoserine. The segment covering 1180–1193 (PSPSTTPLPDSSPS) has biased composition (low complexity). S1233 bears the Phosphoserine mark. Composition is skewed to basic and acidic residues over residues 1240–1249 (GSVHSREAKE) and 1373–1383 (GRRDSDDDHSR). Residues S1386 and S1388 each carry the phosphoserine modification. T1392 carries the post-translational modification Phosphothreonine. Polar residues predominate over residues 1405–1422 (QVGSIQRSIRKSSTSSDN). The segment covering 1447–1460 (KNTDPRFQRSRSEP) has biased composition (basic and acidic residues). Composition is skewed to low complexity over residues 1461 to 1474 (SPDA…CSPS) and 1504 to 1516 (SRTP…SRYS).

The protein belongs to the NHS family. In terms of tissue distribution, widely expressed. Expressed in adult and fetal brain, fetal eyes, adult lens, kidney, liver and intestine.

This chain is NHS-like protein 1 (NHSL1), found in Homo sapiens (Human).